A 392-amino-acid polypeptide reads, in one-letter code: Formate-dependent phosphoribosylglycinamide formyltransferase (392 aa).

N(1)-(5-phospho-beta-D-ribosyl)glycinamide contacts are provided by residues 22-23 and glutamate 82; that span reads EL. Residues arginine 114, lysine 155, 160 to 165, 195 to 198, and glutamate 203 each bind ATP; these read SSGKGQ and EGVV. In terms of domain architecture, ATP-grasp spans 119–308; sequence RLAAEELQLP…EFALHVRAFL (190 aa). Positions 267 and 279 each coordinate Mg(2+). N(1)-(5-phospho-beta-D-ribosyl)glycinamide-binding positions include aspartate 286, lysine 355, and 362 to 363; that span reads RR.

It belongs to the PurK/PurT family. In terms of assembly, homodimer.

The enzyme catalyses N(1)-(5-phospho-beta-D-ribosyl)glycinamide + formate + ATP = N(2)-formyl-N(1)-(5-phospho-beta-D-ribosyl)glycinamide + ADP + phosphate + H(+). It functions in the pathway purine metabolism; IMP biosynthesis via de novo pathway; N(2)-formyl-N(1)-(5-phospho-D-ribosyl)glycinamide from N(1)-(5-phospho-D-ribosyl)glycinamide (formate route): step 1/1. In terms of biological role, involved in the de novo purine biosynthesis. Catalyzes the transfer of formate to 5-phospho-ribosyl-glycinamide (GAR), producing 5-phospho-ribosyl-N-formylglycinamide (FGAR). Formate is provided by PurU via hydrolysis of 10-formyl-tetrahydrofolate. The protein is Formate-dependent phosphoribosylglycinamide formyltransferase of Escherichia coli O157:H7.